We begin with the raw amino-acid sequence, 83 residues long: MLRNLLALRQIGQRTISTASRRHFKNKVPEKQKLFQEDDEIPLYLKGGVADALLYRATMILTVGGTAYAIYELAVASFPKKQE.

The transit peptide at 1-23 (MLRNLLALRQIGQRTISTASRRH) directs the protein to the mitochondrion. At 24–48 (FKNKVPEKQKLFQEDDEIPLYLKGG) the chain is on the mitochondrial matrix side. The residue at position 33 (Lys33) is an N6-acetyllysine. A helical membrane pass occupies residues 49–77 (VADALLYRATMILTVGGTAYAIYELAVAS). Over 78 to 83 (FPKKQE) the chain is Mitochondrial intermembrane.

This sequence belongs to the cytochrome c oxidase VIIa family. Component of the cytochrome c oxidase (complex IV, CIV), a multisubunit enzyme composed of 14 subunits. The complex is composed of a catalytic core of 3 subunits MT-CO1, MT-CO2 and MT-CO3, encoded in the mitochondrial DNA, and 11 supernumerary subunits COX4I1 (or COX4I2), COX5A, COX5B, COX6A1 (or COX6A2), COX6B1 (or COX6B2), COX6C, COX7A2 (or COX7A1), COX7B, COX7C, COX8A and NDUFA4, which are encoded in the nuclear genome. The complex exists as a monomer or a dimer and forms supercomplexes (SCs) in the inner mitochondrial membrane with NADH-ubiquinone oxidoreductase (complex I, CI) and ubiquinol-cytochrome c oxidoreductase (cytochrome b-c1 complex, complex III, CIII), resulting in different assemblies (supercomplex SCI(1)III(2)IV(1) and megacomplex MCI(2)III(2)IV(2)). Interacts with PET100.

It is found in the mitochondrion inner membrane. It functions in the pathway energy metabolism; oxidative phosphorylation. In terms of biological role, component of the cytochrome c oxidase, the last enzyme in the mitochondrial electron transport chain which drives oxidative phosphorylation. The respiratory chain contains 3 multisubunit complexes succinate dehydrogenase (complex II, CII), ubiquinol-cytochrome c oxidoreductase (cytochrome b-c1 complex, complex III, CIII) and cytochrome c oxidase (complex IV, CIV), that cooperate to transfer electrons derived from NADH and succinate to molecular oxygen, creating an electrochemical gradient over the inner membrane that drives transmembrane transport and the ATP synthase. Cytochrome c oxidase is the component of the respiratory chain that catalyzes the reduction of oxygen to water. Electrons originating from reduced cytochrome c in the intermembrane space (IMS) are transferred via the dinuclear copper A center (CU(A)) of subunit 2 and heme A of subunit 1 to the active site in subunit 1, a binuclear center (BNC) formed by heme A3 and copper B (CU(B)). The BNC reduces molecular oxygen to 2 water molecules using 4 electrons from cytochrome c in the IMS and 4 protons from the mitochondrial matrix. The polypeptide is Cytochrome c oxidase subunit 7A2, mitochondrial (COX7A2) (Homo sapiens (Human)).